A 318-amino-acid chain; its full sequence is Apo-salmochelin esterase (318 aa).

The chain crosses the membrane as a helical span at residues 13–32 (KAIFFHLSCLTLICSAQVYA). Catalysis depends on residues Ser189 and His287.

This sequence belongs to the esterase D family. Monomer.

Its subcellular location is the cell inner membrane. The catalysed reaction is enterobactin + H2O = N-(2,3-dihydroxybenzoyl)-L-serine trimer. The enzyme catalyses monoglucosyl-enterobactin + H2O = [N-(2,3-dihydroxybenzoyl)-L-seryl]2-N-(C-5-[deoxy-beta-D-glucosyl]-2,3-dihydroxybenzoyl)-L-serine + H(+). It carries out the reaction diglucosyl-enterobactin + H2O = N-(2,3-dihydroxybenzoyl)-L-seryl-[N-(C-5-[deoxy-beta-D-glucosyl]-2,3-dihydroxybenzoyl)-L-serine]2 + H(+). It catalyses the reaction triglucosyl-enterobactin + H2O = [N-(C-5-[deoxy-beta-D-glucosyl]-2,3-dihydroxybenzoyl)-L-serine]3 + H(+). Catalyzes the hydrolysis of both the apo and Fe3(+)-bound forms of enterobactin (Ent), monoglucosyl-C-Ent (MGE), diglucosyl-C-Ent (DGE) and triglucosyl-C-Ent (TGE). It prefers apo siderophores as substrates and hydrolyzes the Fe3(+)-bound siderophores very inefficiently. Tends to hydrolyze the trilactone just once to produce linearized trimers. May hydrolyze and linearize some or all of apo enterobactins while they are being exported. This Escherichia coli O6:H1 (strain CFT073 / ATCC 700928 / UPEC) protein is Apo-salmochelin esterase.